Reading from the N-terminus, the 131-residue chain is Protein TIFY 5A (131 aa).

The EAR motif lies at 9–13; it reads LELRL. 2 disordered regions span residues 14-44 and 74-131; these read FPTS…EESQ and REMK…HSRR. The span at 16 to 34 shows a compositional bias: low complexity; that stretch reads TSYDSDSSDTTSVVESTSS. A Tify domain is found at 39 to 74; sequence PNEESQRITIFYNGKMCFSSDVTHLQARSIISIASR. The segment covering 79-100 has biased composition (polar residues); sequence KSSSNGSDPPNKSTSFHHNQLP. The Jas signature appears at 105–127; the sequence is SMKKSLQSFLQKRKIRIQATSPY. The Nuclear localization signal signature appears at 106–113; sequence MKKSLQSF. The segment covering 122-131 has biased composition (polar residues); that stretch reads QATSPYHSRR.

This sequence belongs to the TIFY/JAZ family. As to quaternary structure, interacts with TPL and weakly with COI1, but not with AFPH2/NINJA. Interacts with MYC2, MYB21, MYB24, TIFY10A/JAZ1, TIFY10B/JAZ2, TIFY6B/JAZ3, TIFY6A/JAZ4, TIFY11A/JAZ5, TIFY11B/JAZ6, TIFY7/JAZ9, TIFY9/JAZ10 and TIFY3B/JAZ12. Interacts with RHD6 and RSL1. (Microbial infection) Interacts with the pathogenic Pseudomonas syringae HopZ1a protein. In terms of processing, (Microbial infection) Acetylated by Pseudomonas syringae HopZ1a. Post-translationally, ubiquitinated.

The protein localises to the nucleus. Its function is as follows. Repressor of jasmonate responses. Unable to associate strongly with COI1 in the presence of jasmonoyl-isoleucine (JA-Ile) and is therefore more resistant to JA-mediated-degradation than other TIFY/JAZ proteins. Repress gene expression through direct recruitment of the corepressor TOPLESS to cognate transcription factors. Interacts with and suppresses RHD6 and RSL1 transcription factor activities to negatively regulate jasmonate-stimulated root hair development. This chain is Protein TIFY 5A, found in Arabidopsis thaliana (Mouse-ear cress).